We begin with the raw amino-acid sequence, 499 residues long: 3-octaprenyl-4-hydroxybenzoate carboxy-lyase (499 aa).

Residue asparagine 173 coordinates Mn(2+). Residues 176–178, 190–192, and 195–196 each bind prenylated FMN; these read IYR, RWL, and RG. Mn(2+) is bound at residue glutamate 239. Residue aspartate 288 is the Proton donor of the active site.

This sequence belongs to the UbiD family. In terms of assembly, homohexamer. The cofactor is prenylated FMN. Requires Mn(2+) as cofactor.

The protein resides in the cell membrane. It catalyses the reaction a 4-hydroxy-3-(all-trans-polyprenyl)benzoate + H(+) = a 2-(all-trans-polyprenyl)phenol + CO2. It participates in cofactor biosynthesis; ubiquinone biosynthesis. Functionally, catalyzes the decarboxylation of 3-octaprenyl-4-hydroxy benzoate to 2-octaprenylphenol, an intermediate step in ubiquinone biosynthesis. The sequence is that of 3-octaprenyl-4-hydroxybenzoate carboxy-lyase from Blochmanniella floridana.